Reading from the N-terminus, the 349-residue chain is MAATAAEVAASGSGEAREEAEAPGPAWDESQLRSYSFPTRPIPRLSQSDPRAEELIENEEPVVLTDTNLVYPALKWDLEYLQENIGNGDFSVYSASTHKFLYYDEKKMGNFQNFKPRSNREEIKFHEFVEKLQAIQQRGGEERLYLQQTLNDTVGRKIVMDFLGFNWNWINKQQGKRGWGQLTSNLLLIGMEGNVTPAHYDEQQNFFAQIKGHKRCILFPPDQFECLYPYPVHHPCDRQSQVDFDNPDYERFPNFRNVVGYETVVGPGDVLYIPMYWWHHIESLLNGGITITVNFWYKGAPTPKRIEYPLKAHQKVAIMRNIEKMLGEALGNPQEVGPLLNTMIKGRYN.

Low complexity predominate over residues 1–14; sequence MAATAAEVAASGSG. The disordered stretch occupies residues 1–51; sequence MAATAAEVAASGSGEAREEAEAPGPAWDESQLRSYSFPTRPIPRLSQSDPR. Alanine 2 bears the N-acetylalanine mark. Residues 2–125 form an interaction with VHL region; the sequence is AATAAEVAAS…PRSNREEIKF (124 aa). One can recognise a JmjC domain in the interval 142-307; that stretch reads ERLYLQQTLN…KGAPTPKRIE (166 aa). Tyrosine 145 contacts 2-oxoglutarate. Residues aspartate 152 and 181–183 each bind substrate; that span reads QLT. Threonine 196 is a 2-oxoglutarate binding site. Residues histidine 199 and aspartate 201 each contribute to the Fe cation site. Residue 201-203 coordinates substrate; sequence DEQ. Positions 205 and 214 each coordinate 2-oxoglutarate. Residue 238-239 participates in substrate binding; sequence RQ. Histidine 279 contributes to the Fe cation binding site. Asparagine 294 is a binding site for 2-oxoglutarate. Substrate-binding residues include alanine 300 and asparagine 321.

As to quaternary structure, homodimer; homodimerization is essential for catalytic activity. Interacts with VHL and HIF1A. Part of a complex with VHL, HIF1A and HDAC1 or HDAC2 or HDAC3. Interacts with NFKB1 and NFKBIA. Interacts with NOTCH1, NOTCH2 and NOTCH3 but not with NOTCH4. Interacts with ABPA3. Interacts with TNKS2. Interacts with PPP1R12A. Interacts with UBE3A. Interacts with ASB4. Interacts with ANKS3. Interacts with NECAB3; the interaction is indirect and seems to be mediated by APBA3. Fe(2+) is required as a cofactor.

It is found in the nucleus. Its subcellular location is the cytoplasm. The protein resides in the perinuclear region. It catalyses the reaction L-asparaginyl-[hypoxia-inducible factor alpha subunit] + 2-oxoglutarate + O2 = (3S)-3-hydroxy-L-asparaginyl-[hypoxia-inducible factor alpha subunit] + succinate + CO2. It carries out the reaction L-histidyl-[ankyrin-repeat domain protein] + 2-oxoglutarate + O2 = (3S)-3-hydroxy-L-histidyl-[ankyrin-repeat domain protein] + succinate + CO2. The catalysed reaction is L-asparaginyl-[ankyrin-repeat domain protein] + 2-oxoglutarate + O2 = (3S)-3-hydroxy-L-asparaginyl-[ankyrin-repeat domain protein] + succinate + CO2. The enzyme catalyses L-aspartyl-[ankyrin-repeat domain protein] + 2-oxoglutarate + O2 = (3S)-3-hydroxy-L-aspartyl-[ankyrin-repeat domain protein] + succinate + CO2. Functionally, hydroxylates HIF-1 alpha at 'Asn-799' in the C-terminal transactivation domain (CAD). Functions as an oxygen sensor and, under normoxic conditions, the hydroxylation prevents interaction of HIF-1 with transcriptional coactivators including Cbp/p300-interacting transactivator. Involved in transcriptional repression through interaction with HIF1A, VHL and histone deacetylases. Hydroxylates specific Asn residues within ankyrin repeat domains (ARD) of NFKB1, NFKBIA, NOTCH1, ASB4, PPP1R12A and several other ARD-containing proteins. Also hydroxylates Asp and His residues within ARDs of ANK1 and TNKS2, respectively. Negatively regulates NOTCH1 activity, accelerating myogenic differentiation. Positively regulates ASB4 activity, promoting vascular differentiation. The sequence is that of Hypoxia-inducible factor 1-alpha inhibitor (Hif1an) from Mus musculus (Mouse).